The chain runs to 216 residues: Uridine kinase (216 aa).

16-23 (GASASGKS) serves as a coordination point for ATP.

This sequence belongs to the uridine kinase family.

It localises to the cytoplasm. It catalyses the reaction uridine + ATP = UMP + ADP + H(+). It carries out the reaction cytidine + ATP = CMP + ADP + H(+). It participates in pyrimidine metabolism; CTP biosynthesis via salvage pathway; CTP from cytidine: step 1/3. Its pathway is pyrimidine metabolism; UMP biosynthesis via salvage pathway; UMP from uridine: step 1/1. The sequence is that of Uridine kinase from Mannheimia succiniciproducens (strain KCTC 0769BP / MBEL55E).